Here is a 266-residue protein sequence, read N- to C-terminus: 2-Cys peroxiredoxin BAS1, chloroplastic (266 aa).

The span at 1–16 shows a compositional bias: low complexity; sequence MASVASSTTLISSPSS. The disordered stretch occupies residues 1-25; sequence MASVASSTTLISSPSSRVFPAKSSL. The transit peptide at 1–65 directs the protein to the chloroplast; sequence MASVASSTTL…SSTSRRSFAV (65 aa). The region spanning 73–232 is the Thioredoxin domain; it reads PLVGNKAPDF…TMRTLQALQY (160 aa). The active-site Cysteine sulfenic acid (-SOH) intermediate is the Cys-119.

The protein belongs to the peroxiredoxin family. AhpC/Prx1 subfamily. Homodimer; disulfide-linked, upon oxidation. Interacts with the plastidial thioredoxin CDSP32. Interacts with the plastidial NADPH-dependent thioredoxin reductase ANTR-C.

It localises to the plastid. The protein localises to the chloroplast. It catalyses the reaction a hydroperoxide + [thioredoxin]-dithiol = an alcohol + [thioredoxin]-disulfide + H2O. Functionally, thiol-specific peroxidase that catalyzes the reduction of hydrogen peroxide and organic hydroperoxides to water and alcohols, respectively. Plays a role in cell protection against oxidative stress by detoxifying peroxides. May be an antioxidant enzyme particularly in the developing shoot and photosynthesizing leaf. This chain is 2-Cys peroxiredoxin BAS1, chloroplastic (BAS1), found in Arabidopsis thaliana (Mouse-ear cress).